The following is a 339-amino-acid chain: DNA-directed RNA polymerase subunit alpha (339 aa).

Positions 1-233 (MVREKVRIST…DLFIPFLHAE (233 aa)) are alpha N-terminal domain (alpha-NTD). The tract at residues 267–339 (IALKSIFIDQ…FTINLPKNKF (73 aa)) is alpha C-terminal domain (alpha-CTD).

This sequence belongs to the RNA polymerase alpha chain family. As to quaternary structure, in plastids the minimal PEP RNA polymerase catalytic core is composed of four subunits: alpha, beta, beta', and beta''. When a (nuclear-encoded) sigma factor is associated with the core the holoenzyme is formed, which can initiate transcription.

Its subcellular location is the plastid. It is found in the chloroplast. The enzyme catalyses RNA(n) + a ribonucleoside 5'-triphosphate = RNA(n+1) + diphosphate. DNA-dependent RNA polymerase catalyzes the transcription of DNA into RNA using the four ribonucleoside triphosphates as substrates. The chain is DNA-directed RNA polymerase subunit alpha from Populus trichocarpa (Western balsam poplar).